We begin with the raw amino-acid sequence, 338 residues long: Ketol-acid reductoisomerase (NADP(+)) (338 aa).

The 181-residue stretch at 3–183 (IELLYDADAD…GGARAGVIPT (181 aa)) folds into the KARI N-terminal Rossmann domain. NADP(+) contacts are provided by residues 26 to 29 (YGSQ), arginine 49, serine 52, serine 54, and 84 to 87 (DTSQ). Residue histidine 109 is part of the active site. Glycine 135 is a binding site for NADP(+). Positions 184–329 (TFEAETVTDL…AKLRDLMSWV (146 aa)) constitute a KARI C-terminal knotted domain. Aspartate 192, glutamate 196, glutamate 228, and glutamate 232 together coordinate Mg(2+). Serine 253 contributes to the substrate binding site.

The protein belongs to the ketol-acid reductoisomerase family. Mg(2+) is required as a cofactor.

It carries out the reaction (2R)-2,3-dihydroxy-3-methylbutanoate + NADP(+) = (2S)-2-acetolactate + NADPH + H(+). The catalysed reaction is (2R,3R)-2,3-dihydroxy-3-methylpentanoate + NADP(+) = (S)-2-ethyl-2-hydroxy-3-oxobutanoate + NADPH + H(+). It functions in the pathway amino-acid biosynthesis; L-isoleucine biosynthesis; L-isoleucine from 2-oxobutanoate: step 2/4. It participates in amino-acid biosynthesis; L-valine biosynthesis; L-valine from pyruvate: step 2/4. Involved in the biosynthesis of branched-chain amino acids (BCAA). Catalyzes an alkyl-migration followed by a ketol-acid reduction of (S)-2-acetolactate (S2AL) to yield (R)-2,3-dihydroxy-isovalerate. In the isomerase reaction, S2AL is rearranged via a Mg-dependent methyl migration to produce 3-hydroxy-3-methyl-2-ketobutyrate (HMKB). In the reductase reaction, this 2-ketoacid undergoes a metal-dependent reduction by NADPH to yield (R)-2,3-dihydroxy-isovalerate. This chain is Ketol-acid reductoisomerase (NADP(+)), found in Corynebacterium glutamicum (strain ATCC 13032 / DSM 20300 / JCM 1318 / BCRC 11384 / CCUG 27702 / LMG 3730 / NBRC 12168 / NCIMB 10025 / NRRL B-2784 / 534).